The primary structure comprises 341 residues: KH domain-containing RNA-binding protein qki.S (341 aa).

Residues 88 to 154 (YVPVKEYPDF…WEHLNEDLHV (67 aa)) enclose the KH domain. Residues 324–330 (RVHPYQR) carry the Nuclear localization signal motif.

Belongs to the quaking family. In terms of assembly, homodimer; does not require RNA to homodimerize.

It localises to the nucleus. The protein localises to the cytoplasm. Its function is as follows. RNA reader protein, which recognizes and binds specific RNAs, thereby regulating RNA metabolic processes, such as pre-mRNA splicing, circular RNA (circRNA) formation, mRNA export, mRNA stability and/or translation. Involved in various cellular processes, such as mRNA storage into stress granules, apoptosis, interferon response, glial cell fate and development. Binds to the 5'-NACUAAY-N(1,20)-UAAY-3' RNA core sequence. Acts as a mRNA modification reader that specifically recognizes and binds mRNA transcripts modified by internal N(7)-methylguanine (m7G). Promotes the formation of circular RNAs (circRNAs): acts by binding to sites flanking circRNA-forming exons. CircRNAs are produced by back-splicing circularization of pre-mRNAs. Required to protect and promote stability of mRNAs which promotes oligodendrocyte differentiation. Acts as an important regulator of muscle development. Essential for notochord development. The polypeptide is KH domain-containing RNA-binding protein qki.S (Xenopus laevis (African clawed frog)).